The chain runs to 147 residues: Large ribosomal subunit protein uL13 (147 aa).

The protein belongs to the universal ribosomal protein uL13 family. Part of the 50S ribosomal subunit.

In terms of biological role, this protein is one of the early assembly proteins of the 50S ribosomal subunit, although it is not seen to bind rRNA by itself. It is important during the early stages of 50S assembly. This chain is Large ribosomal subunit protein uL13, found in Polaromonas naphthalenivorans (strain CJ2).